Reading from the N-terminus, the 236-residue chain is MNEQVNENKIQIVIIDDHQLFREGVKRILAMEPEFEVVADGEDGENAVELVEKYNPDVILMDINMPKVNGVEATRDLIQRYPDVKVLVLSIHDDESYVTHVLKTGASGYLLKEMDADALIEAVKVVAQGGAYIHPKVTHNLIKEYRRLVNEDEQESSEIGFKEVEYRKPLHILTRRECEVLQLMTDGYSNRMIGEALYISEKTVKNHVSNILQKMNVNDRTQAVVESIKNGWVKVR.

The region spanning 11 to 127 (QIVIIDDHQL…ALIEAVKVVA (117 aa)) is the Response regulatory domain. Asp62 carries the post-translational modification 4-aspartylphosphate. The 66-residue stretch at 166–231 (YRKPLHILTR…QAVVESIKNG (66 aa)) folds into the HTH luxR-type domain. The segment at residues 190–209 (NRMIGEALYISEKTVKNHVS) is a DNA-binding region (H-T-H motif).

In terms of processing, phosphorylated and dephosphorylated by DegS.

The protein resides in the cytoplasm. In terms of biological role, member of the two-component regulatory system DegS/DegU, which plays an important role in the transition growth phase. In Brevibacillus brevis (Bacillus brevis), this protein is Transcriptional regulatory protein DegU (degU).